Consider the following 103-residue polypeptide: MREEILEIFLLVNFVFILCTSIMVRIRYVSCKTNFDCVNLKCPTPFVTPKCVSGGCECPLKELLTLLSDTNYGVAACIDYCKAKGENAYTCILNHCYCRKPSM.

An N-terminal signal peptide occupies residues 1–31 (MREEILEIFLLVNFVFILCTSIMVRIRYVSC). 3 disulfide bridges follow: Cys31-Cys51, Cys37-Cys56, and Cys42-Cys58.

Belongs to the DEFL family.

Its subcellular location is the secreted. In Arabidopsis thaliana (Mouse-ear cress), this protein is Putative defensin-like protein 305.